We begin with the raw amino-acid sequence, 313 residues long: Formimidoylglutamase (313 aa).

Positions 130, 155, 157, 159, 241, and 243 each coordinate Mn(2+).

Belongs to the arginase family. It depends on Mn(2+) as a cofactor.

It catalyses the reaction N-formimidoyl-L-glutamate + H2O = formamide + L-glutamate. It functions in the pathway amino-acid degradation; L-histidine degradation into L-glutamate; L-glutamate from N-formimidoyl-L-glutamate (hydrolase route): step 1/1. Catalyzes the conversion of N-formimidoyl-L-glutamate to L-glutamate and formamide. The sequence is that of Formimidoylglutamase from Salmonella paratyphi B (strain ATCC BAA-1250 / SPB7).